We begin with the raw amino-acid sequence, 263 residues long: Tryptophan synthase alpha chain (263 aa).

Catalysis depends on proton acceptor residues E50 and D61.

The protein belongs to the TrpA family. As to quaternary structure, tetramer of two alpha and two beta chains.

It carries out the reaction (1S,2R)-1-C-(indol-3-yl)glycerol 3-phosphate + L-serine = D-glyceraldehyde 3-phosphate + L-tryptophan + H2O. It participates in amino-acid biosynthesis; L-tryptophan biosynthesis; L-tryptophan from chorismate: step 5/5. The alpha subunit is responsible for the aldol cleavage of indoleglycerol phosphate to indole and glyceraldehyde 3-phosphate. This is Tryptophan synthase alpha chain from Clostridium acetobutylicum (strain ATCC 824 / DSM 792 / JCM 1419 / IAM 19013 / LMG 5710 / NBRC 13948 / NRRL B-527 / VKM B-1787 / 2291 / W).